Consider the following 215-residue polypeptide: 25 kDa ookinete surface antigen (215 aa).

The N-terminal stretch at 1-16 is a signal peptide; the sequence is MNMSYLFFFFFIQLVL. In terms of domain architecture, EGF-like 1; truncated spans 29–58; that stretch reads CKDGFLIQMSNHFECNCNPGFVLTSESTCE. EGF-like domains follow at residues 59–104, 104–148, and 151–191; these read NKVE…SICV, VPNE…NTCT, and GQTE…NACI. Intrachain disulfides connect cysteine 63/cysteine 78, cysteine 72/cysteine 90, cysteine 92/cysteine 103, cysteine 108/cysteine 118, cysteine 113/cysteine 131, cysteine 133/cysteine 147, cysteine 155/cysteine 166, cysteine 159/cysteine 175, and cysteine 177/cysteine 190. 2 N-linked (GlcNAc...) asparagine glycosylation sites follow: asparagine 144 and asparagine 163. Serine 192 carries GPI-anchor amidated serine lipidation. A propeptide spans 193–215 (removed in mature form); the sequence is FSLFNILNLSIIFIISLIYFYII. Residue asparagine 200 is glycosylated (N-linked (GlcNAc...) asparagine).

The protein localises to the cell membrane. The sequence is that of 25 kDa ookinete surface antigen from Plasmodium gallinaceum.